The following is a 363-amino-acid chain: NAD kinase 1 (363 aa).

Asp-68 functions as the Proton acceptor in the catalytic mechanism. NAD(+) contacts are provided by residues 68-69 (DG), Arg-73, 175-176 (ND), Arg-186, Asp-205, Ala-240, and Gln-275.

It belongs to the NAD kinase family. It depends on a divalent metal cation as a cofactor.

Its subcellular location is the cytoplasm. It catalyses the reaction NAD(+) + ATP = ADP + NADP(+) + H(+). Its function is as follows. Involved in the regulation of the intracellular balance of NAD and NADP, and is a key enzyme in the biosynthesis of NADP. Catalyzes specifically the phosphorylation on 2'-hydroxyl of the adenosine moiety of NAD to yield NADP. This is NAD kinase 1 from Streptomyces coelicolor (strain ATCC BAA-471 / A3(2) / M145).